We begin with the raw amino-acid sequence, 156 residues long: Peptide deformylase 1 (156 aa).

Residues cysteine 90 and histidine 132 each coordinate Fe cation. The active site involves glutamate 133. Histidine 136 provides a ligand contact to Fe cation.

This sequence belongs to the polypeptide deformylase family. Requires Fe(2+) as cofactor.

It carries out the reaction N-terminal N-formyl-L-methionyl-[peptide] + H2O = N-terminal L-methionyl-[peptide] + formate. Removes the formyl group from the N-terminal Met of newly synthesized proteins. Requires at least a dipeptide for an efficient rate of reaction. N-terminal L-methionine is a prerequisite for activity but the enzyme has broad specificity at other positions. The protein is Peptide deformylase 1 of Bacillus cereus (strain ATCC 14579 / DSM 31 / CCUG 7414 / JCM 2152 / NBRC 15305 / NCIMB 9373 / NCTC 2599 / NRRL B-3711).